The following is a 175-amino-acid chain: NADH-ubiquinone oxidoreductase chain 6 (175 aa).

A run of 5 helical transmembrane segments spans residues M1 to S21, S25 to L45, F47 to V67, T88 to L108, and Y149 to M169.

The protein belongs to the complex I subunit 6 family. In terms of assembly, core subunit of respiratory chain NADH dehydrogenase (Complex I) which is composed of 45 different subunits.

It is found in the mitochondrion inner membrane. It carries out the reaction a ubiquinone + NADH + 5 H(+)(in) = a ubiquinol + NAD(+) + 4 H(+)(out). Core subunit of the mitochondrial membrane respiratory chain NADH dehydrogenase (Complex I) which catalyzes electron transfer from NADH through the respiratory chain, using ubiquinone as an electron acceptor. Essential for the catalytic activity and assembly of complex I. This is NADH-ubiquinone oxidoreductase chain 6 (MT-ND6) from Sus scrofa (Pig).